A 461-amino-acid chain; its full sequence is Lysosomal proton-coupled steroid conjugate and bile acid symporter SLC46A3 (461 aa).

The first 25 residues, Met1–Thr25, serve as a signal peptide directing secretion. The Extracellular portion of the chain corresponds to Gln26–Asn73. N-linked (GlcNAc...) asparagine glycosylation is found at Asn38, Asn46, and Asn53. Residues Leu74 to Ile94 form a helical membrane-spanning segment. Residues Ser95–Lys101 lie on the Cytoplasmic side of the membrane. Residues Phe102 to Phe124 traverse the membrane as a helical segment. Residues Ala125–Ala133 lie on the Extracellular side of the membrane. A helical transmembrane segment spans residues Ser134–Val156. At Asp157 to Ala170 the chain is on the cytoplasmic side. A helical membrane pass occupies residues Ile171–Ile191. Over Arg192–Glu197 the chain is Extracellular. Residues Trp198–Leu218 traverse the membrane as a helical segment. The Cytoplasmic portion of the chain corresponds to Gly219–Cys261. A helical transmembrane segment spans residues Leu262–Ile282. The Extracellular segment spans residues Leu283–Glu294. Residues Val295 to Ile315 form a helical membrane-spanning segment. The Cytoplasmic portion of the chain corresponds to Trp316 to Asp324. A helical transmembrane segment spans residues Ile325–Ala345. Residues Ser346–Thr347 are Extracellular-facing. A helical membrane pass occupies residues Thr348–Leu368. Residues Arg369–Gly382 lie on the Cytoplasmic side of the membrane. Residues Thr383–Phe403 traverse the membrane as a helical segment. The Extracellular portion of the chain corresponds to Asn404–Pro415. A helical transmembrane segment spans residues Gly416–Val436. Topologically, residues Lys437–Arg461 are cytoplasmic. A Tyrosine-based lysosomal-sorting motif motif is present at residues Tyr446–Leu449.

It belongs to the major facilitator superfamily. SLC46A family.

It is found in the lysosome membrane. It carries out the reaction estrone 3-sulfate(out) + n H(+)(out) = estrone 3-sulfate(in) + n H(+)(in). The enzyme catalyses 25-hydroxyvitamin D3 sulfate(out) + n H(+)(out) = 25-hydroxyvitamin D3 sulfate(in) + n H(+)(in). The catalysed reaction is cholate(out) + n H(+)(out) = cholate(in) + n H(+)(in). It catalyses the reaction glycocholate(out) + n H(+)(out) = glycocholate(in) + n H(+)(in). It carries out the reaction taurocholate(out) + n H(+)(out) = taurocholate(in) + n H(+)(in). The enzyme catalyses dehydroepiandrosterone 3-sulfate(out) + n H(+)(out) = dehydroepiandrosterone 3-sulfate(in) + n H(+)(in). The catalysed reaction is N-acetyl-D-muramoyl-L-alanyl-D-isoglutamine(out) + n H(+)(out) = N-acetyl-D-muramoyl-L-alanyl-D-isoglutamine(in) + n H(+)(in). It catalyses the reaction 2',3'-cGAMP(out) + n H(+)(out) = 2',3'-cGAMP(in) + n H(+)(in). Lysosomal proton-coupled steroid conjugate and bile acid transporter. Preferentially recognizes lipophilic steroid conjugates or bile acis as endogenous substrates and seems to mediate escape from lysosomes to the cytoplasm. Modulates hepatic cytosolic copper homeostasis, maybe acting as a lysosomal copper transporter and sequestering copper ions in the lysosome. Transports catabolites of non-cleavable antibody-drug conjugates from the lysosome to the cytoplasm. Delivers pathogen-associated molecular patterns to cytosolic pattern recognition receptors as part of the innate immune response to microbes. Selectively transports bacterial muramyl dipeptide (MDP) into the cytosol for recognition by NOD2, triggering inflammatory responses. Likely acts as a redundant importer of cyclic GMP-AMP dinucleotides (cGAMPs) in monocyte and macrophage cell lineages. The transport mechanism, its electrogenicity and stoichiometry remain to be elucidated. The protein is Lysosomal proton-coupled steroid conjugate and bile acid symporter SLC46A3 of Homo sapiens (Human).